Consider the following 205-residue polypeptide: Ribosomal RNA small subunit methyltransferase G (205 aa).

Residues Gly-70, Leu-75, 121–122 (IE), and Arg-136 each bind S-adenosyl-L-methionine.

Belongs to the methyltransferase superfamily. RNA methyltransferase RsmG family.

The protein resides in the cytoplasm. It catalyses the reaction guanosine(527) in 16S rRNA + S-adenosyl-L-methionine = N(7)-methylguanosine(527) in 16S rRNA + S-adenosyl-L-homocysteine. Specifically methylates the N7 position of guanine in position 527 of 16S rRNA. This is Ribosomal RNA small subunit methyltransferase G from Methylococcus capsulatus (strain ATCC 33009 / NCIMB 11132 / Bath).